Reading from the N-terminus, the 464-residue chain is Glutamate--tRNA ligase (464 aa).

A 'HIGH' region motif is present at residues 11-21; sequence PSPTGYLHIGG. The 'KMSKS' region signature appears at 253 to 257; it reads KLSKR. Lysine 256 serves as a coordination point for ATP.

This sequence belongs to the class-I aminoacyl-tRNA synthetase family. Glutamate--tRNA ligase type 1 subfamily. Monomer.

It is found in the cytoplasm. The catalysed reaction is tRNA(Glu) + L-glutamate + ATP = L-glutamyl-tRNA(Glu) + AMP + diphosphate. In terms of biological role, catalyzes the attachment of glutamate to tRNA(Glu) in a two-step reaction: glutamate is first activated by ATP to form Glu-AMP and then transferred to the acceptor end of tRNA(Glu). The chain is Glutamate--tRNA ligase from Metamycoplasma arthritidis (strain 158L3-1) (Mycoplasma arthritidis).